The primary structure comprises 242 residues: NLP effector protein 8 (242 aa).

Residues Met1–Ala17 form the signal peptide. Positions Ala108–Asp118 match the Conserved undecapeptide motif motif. The Conserved heptapeptide motif motif lies at Gly127–Glu133. A glycan (N-linked (GlcNAc...) asparagine) is linked at Asn206.

Belongs to the Necrosis inducing protein (NPP1) family.

It localises to the secreted. In terms of biological role, probable secreted effector that may act as a pathogen-associated molecular pattern (PAMP) recognized by the plant immune system. This chain is NLP effector protein 8, found in Plasmopara viticola (Downy mildew of grapevine).